The primary structure comprises 289 residues: Homoserine kinase (289 aa).

79–89 (PLARGLGSSSS) contributes to the ATP binding site.

This sequence belongs to the GHMP kinase family. Homoserine kinase subfamily.

The protein resides in the cytoplasm. It carries out the reaction L-homoserine + ATP = O-phospho-L-homoserine + ADP + H(+). It participates in amino-acid biosynthesis; L-threonine biosynthesis; L-threonine from L-aspartate: step 4/5. Functionally, catalyzes the ATP-dependent phosphorylation of L-homoserine to L-homoserine phosphate. This is Homoserine kinase from Streptococcus pneumoniae serotype 2 (strain D39 / NCTC 7466).